We begin with the raw amino-acid sequence, 407 residues long: Phosphopentomutase (407 aa).

Residues aspartate 10, aspartate 306, histidine 311, aspartate 347, histidine 348, and histidine 359 each coordinate Mn(2+).

It belongs to the phosphopentomutase family. Mn(2+) serves as cofactor.

It localises to the cytoplasm. The catalysed reaction is 2-deoxy-alpha-D-ribose 1-phosphate = 2-deoxy-D-ribose 5-phosphate. The enzyme catalyses alpha-D-ribose 1-phosphate = D-ribose 5-phosphate. It participates in carbohydrate degradation; 2-deoxy-D-ribose 1-phosphate degradation; D-glyceraldehyde 3-phosphate and acetaldehyde from 2-deoxy-alpha-D-ribose 1-phosphate: step 1/2. Isomerase that catalyzes the conversion of deoxy-ribose 1-phosphate (dRib-1-P) and ribose 1-phosphate (Rib-1-P) to deoxy-ribose 5-phosphate (dRib-5-P) and ribose 5-phosphate (Rib-5-P), respectively. This chain is Phosphopentomutase, found in Cronobacter sakazakii (strain ATCC BAA-894) (Enterobacter sakazakii).